The chain runs to 430 residues: Tektin-2 (430 aa).

2 coiled-coil regions span residues 81-162 (CLTD…FEKL) and 265-379 (FRKR…DIAC).

The protein belongs to the tektin family. In terms of assembly, microtubule inner protein component of sperm flagellar doublet microtubules. May interact with CCDC172. In terms of processing, tyrosine phosphorylated. Post-translationally, ubiquitinated, leading to its degradation. Deubiquitinated by USP16, promoting its stability. As to expression, expressed in trachea multiciliated cells.

The protein localises to the cytoplasm. It is found in the cytoskeleton. The protein resides in the cilium axoneme. Its subcellular location is the flagellum axoneme. It localises to the microtubule organizing center. Its function is as follows. Microtubule inner protein (MIP) part of the dynein-decorated doublet microtubules (DMTs) in cilia and flagellar axoneme. Plays a key role in the assembly or attachment of the inner dynein arm to microtubules in sperm flagella and tracheal cilia. Forms filamentous polymers in the walls of ciliary and flagellar microtubules. The sequence is that of Tektin-2 (TEKT2) from Bos taurus (Bovine).